Reading from the N-terminus, the 371-residue chain is Diterpene cyclase DtcycA (371 aa).

Mg(2+) is bound by residues Asn-234, Ser-238, and Glu-242.

The protein belongs to the terpene synthase family. As to quaternary structure, homodimer. The cofactor is Mg(2+).

It catalyses the reaction (2E,6E,10E)-geranylgeranyl diphosphate = cembrene C + diphosphate. It carries out the reaction (2E,6E,10E)-geranylgeranyl diphosphate + H2O = (R)-nephthenol + diphosphate. Diterpene cyclases that can form multiple diterpene products. The protein is Diterpene cyclase DtcycA of Streptomyces sp.